Consider the following 292-residue polypeptide: Phosphatidylserine decarboxylase proenzyme (292 aa).

Residues aspartate 89, histidine 146, and serine 252 each act as charge relay system; for autoendoproteolytic cleavage activity in the active site. The Schiff-base intermediate with substrate; via pyruvic acid; for decarboxylase activity role is filled by serine 252. Serine 252 carries the pyruvic acid (Ser); by autocatalysis modification.

It belongs to the phosphatidylserine decarboxylase family. PSD-B subfamily. Prokaryotic type I sub-subfamily. Heterodimer of a large membrane-associated beta subunit and a small pyruvoyl-containing alpha subunit. The cofactor is pyruvate. Is synthesized initially as an inactive proenzyme. Formation of the active enzyme involves a self-maturation process in which the active site pyruvoyl group is generated from an internal serine residue via an autocatalytic post-translational modification. Two non-identical subunits are generated from the proenzyme in this reaction, and the pyruvate is formed at the N-terminus of the alpha chain, which is derived from the carboxyl end of the proenzyme. The autoendoproteolytic cleavage occurs by a canonical serine protease mechanism, in which the side chain hydroxyl group of the serine supplies its oxygen atom to form the C-terminus of the beta chain, while the remainder of the serine residue undergoes an oxidative deamination to produce ammonia and the pyruvoyl prosthetic group on the alpha chain. During this reaction, the Ser that is part of the protease active site of the proenzyme becomes the pyruvoyl prosthetic group, which constitutes an essential element of the active site of the mature decarboxylase.

It is found in the cell membrane. The enzyme catalyses a 1,2-diacyl-sn-glycero-3-phospho-L-serine + H(+) = a 1,2-diacyl-sn-glycero-3-phosphoethanolamine + CO2. It functions in the pathway phospholipid metabolism; phosphatidylethanolamine biosynthesis; phosphatidylethanolamine from CDP-diacylglycerol: step 2/2. Catalyzes the formation of phosphatidylethanolamine (PtdEtn) from phosphatidylserine (PtdSer). The protein is Phosphatidylserine decarboxylase proenzyme of Shewanella baltica (strain OS185).